The chain runs to 544 residues: Probable protein kinase UbiB (544 aa).

Positions 123–501 (DFDLVPLASA…KRQQATGKFL (379 aa)) constitute a Protein kinase domain. Residues 129–137 (LASASIAQV) and K152 contribute to the ATP site. The active-site Proton acceptor is the D287. The next 2 helical transmembrane spans lie at 496-516 (ATGKFLFGVGATLVVCSAILV) and 519-539 (TYEQLSLATAIAGVTFWLFSW).

The protein belongs to the ABC1 family. UbiB subfamily.

Its subcellular location is the cell inner membrane. The protein operates within cofactor biosynthesis; ubiquinone biosynthesis [regulation]. Functionally, is probably a protein kinase regulator of UbiI activity which is involved in aerobic coenzyme Q (ubiquinone) biosynthesis. The chain is Probable protein kinase UbiB from Vibrio vulnificus (strain CMCP6).